The sequence spans 358 residues: 3-ketosteroid-9-alpha-monooxygenase, ferredoxin reductase component (358 aa).

In terms of domain architecture, FAD-binding FR-type spans 12–124; it reads DHVLELQIAE…LAPSGNFVPT (113 aa). One can recognise a 2Fe-2S ferredoxin-type domain in the interval 269–358; it reads ATAVVELDGQ…SDSVEVTYDE (90 aa). Residues C305, C310, C313, and C343 each contribute to the [2Fe-2S] cluster site.

As to quaternary structure, monomer. The two-component system 3-ketosteroid-9-alpha-monooxygenase is composed of an oxygenase component KshA and a reductase component KshB. FAD serves as cofactor. It depends on [2Fe-2S] cluster as a cofactor.

It carries out the reaction androsta-1,4-diene-3,17-dione + 2 reduced [2Fe-2S]-[ferredoxin] + O2 + 2 H(+) = 9alpha-hydroxyandrosta-1,4-diene-3,17-dione + 2 oxidized [2Fe-2S]-[ferredoxin] + H2O. It functions in the pathway lipid metabolism; steroid biosynthesis. Functionally, involved in the degradation of cholesterol. Catalyzes the introduction of a 9a-hydroxyl moiety into 1,4-androstadiene-3,17-dione (ADD) to yield the 9alpha-hydroxy-1,4-androstadiene-3,17-dione (9OHADD) intermediate which spontaneously form 3-hydroxy-9,10-seconandrost-1,3,5(10)-triene-9,17-dione (HSA) via the meta-cleavage of ring B with concomitant aromatization of ring A. The protein is 3-ketosteroid-9-alpha-monooxygenase, ferredoxin reductase component (hmp) of Mycobacterium tuberculosis (strain CDC 1551 / Oshkosh).